We begin with the raw amino-acid sequence, 339 residues long: tRNA N6-adenosine threonylcarbamoyltransferase (339 aa).

Fe cation contacts are provided by histidine 117 and histidine 121. Substrate is bound by residues 140–144 (VVSGG), aspartate 173, glycine 186, and asparagine 279. Fe cation is bound at residue aspartate 307.

The protein belongs to the KAE1 / TsaD family. Fe(2+) is required as a cofactor.

The protein localises to the cytoplasm. It catalyses the reaction L-threonylcarbamoyladenylate + adenosine(37) in tRNA = N(6)-L-threonylcarbamoyladenosine(37) in tRNA + AMP + H(+). Required for the formation of a threonylcarbamoyl group on adenosine at position 37 (t(6)A37) in tRNAs that read codons beginning with adenine. Is involved in the transfer of the threonylcarbamoyl moiety of threonylcarbamoyl-AMP (TC-AMP) to the N6 group of A37, together with TsaE and TsaB. TsaD likely plays a direct catalytic role in this reaction. In Syntrophomonas wolfei subsp. wolfei (strain DSM 2245B / Goettingen), this protein is tRNA N6-adenosine threonylcarbamoyltransferase.